A 323-amino-acid chain; its full sequence is Digestive cysteine proteinase 2 (323 aa).

Positions M1 to A16 are cleaved as a signal peptide. Positions S17–Q107 are cleaved as a propeptide — activation peptide. 3 disulfides stabilise this stretch: C128/C171, C162/C204, and C263/C312. The active site involves C131. Residues H270 and N290 contribute to the active site.

It belongs to the peptidase C1 family.

With respect to regulation, inhibited by E-64, antipain, leupeptin, heavy metal ions, iodoacetic acid, dithionitrobenzene, p-hydroxymercuri-benzoate; activated by mercaptoethanol and dithiothreitol. The protein is Digestive cysteine proteinase 2 (LCP2) of Homarus americanus (American lobster).